A 390-amino-acid chain; its full sequence is Tryptophan synthase beta chain (390 aa).

N6-(pyridoxal phosphate)lysine is present on K90.

It belongs to the TrpB family. In terms of assembly, tetramer of two alpha and two beta chains. Pyridoxal 5'-phosphate is required as a cofactor.

The enzyme catalyses (1S,2R)-1-C-(indol-3-yl)glycerol 3-phosphate + L-serine = D-glyceraldehyde 3-phosphate + L-tryptophan + H2O. Its pathway is amino-acid biosynthesis; L-tryptophan biosynthesis; L-tryptophan from chorismate: step 5/5. Functionally, the beta subunit is responsible for the synthesis of L-tryptophan from indole and L-serine. This chain is Tryptophan synthase beta chain, found in Bacteroides fragilis (strain ATCC 25285 / DSM 2151 / CCUG 4856 / JCM 11019 / LMG 10263 / NCTC 9343 / Onslow / VPI 2553 / EN-2).